Consider the following 213-residue polypeptide: ATP synthase subunit b 2 (213 aa).

The tract at residues 1-45 (MFVTEAYAQSAPTVGETHTETPAVGQPQPEATHTETGVAHGAEHG) is disordered. The helical transmembrane segment at 57–76 (TYASQVLWLAITFGLFYLLM) threads the bilayer.

It belongs to the ATPase B chain family. In terms of assembly, F-type ATPases have 2 components, F(1) - the catalytic core - and F(0) - the membrane proton channel. F(1) has five subunits: alpha(3), beta(3), gamma(1), delta(1), epsilon(1). F(0) has three main subunits: a(1), b(2) and c(10-14). The alpha and beta chains form an alternating ring which encloses part of the gamma chain. F(1) is attached to F(0) by a central stalk formed by the gamma and epsilon chains, while a peripheral stalk is formed by the delta and b chains.

The protein resides in the cell inner membrane. Its function is as follows. F(1)F(0) ATP synthase produces ATP from ADP in the presence of a proton or sodium gradient. F-type ATPases consist of two structural domains, F(1) containing the extramembraneous catalytic core and F(0) containing the membrane proton channel, linked together by a central stalk and a peripheral stalk. During catalysis, ATP synthesis in the catalytic domain of F(1) is coupled via a rotary mechanism of the central stalk subunits to proton translocation. Component of the F(0) channel, it forms part of the peripheral stalk, linking F(1) to F(0). The b'-subunit is a diverged and duplicated form of b found in plants and photosynthetic bacteria. This Agrobacterium fabrum (strain C58 / ATCC 33970) (Agrobacterium tumefaciens (strain C58)) protein is ATP synthase subunit b 2 (atpF2).